The following is a 543-amino-acid chain: MSSINLSSSSPSTISLSRSRLSQSSTTLLHGLHRVTLPSNHPLSTFSIKTNTGKVKAAVISREDDLLSFTNGNTPLSNGSLIDDRTEEPLEADSVSLGTLAADSAPAPANGFVAEDDDFELDLPTPGFSSIPEAIEDIRQGKLVVVVDDEDRENEGDLVMAAQLATPEAMAFIVRHGTGIVCVSMKEDDLERLHLPLMVNQKENEEKLSTAFTVTVDAKHGTTTGVSARDRATTILSLASRDSKPEDFNRPGHIFPLKYREGGVLKRAGHTEASVDLTVLAGLDPVGVLCEIVDDDGSMARLPKLREFAAENNLKVVSIADLIRYRRKRDKLVERASAARIPTMWGPFTAYCYRSILDGIEHIAMVKGEIGDGQDILVRVHSECLTGDIFGSARCDCGNQLALSMQQIEATGRGVLVYLRGHEGRGIGLGHKLRAYNLQDAGRDTVEANEELGLPVDSREYGIGAQIIRDLGVRTMKLMTNNPAKYVGLKGYGLAIVGRVPLLSLITKENKRYLETKRTKMGHMYGLKFKGDVVEKIESESES.

The transit peptide at 1–56 directs the protein to the chloroplast; it reads MSSINLSSSSPSTISLSRSRLSQSSTTLLHGLHRVTLPSNHPLSTFSIKTNTGKVK. The tract at residues 57-328 is DHBP synthase; the sequence is AAVISREDDL…IADLIRYRRK (272 aa). D-ribulose 5-phosphate-binding positions include 152–153, Asp157, 267–271, and Glu291; these read RE and RAGHT. A Mg(2+)-binding site is contributed by Glu153. Residue His270 participates in Mg(2+) binding. The tract at residues 329-543 is GTP cyclohydrolase II; it reads RDKLVERASA…VEKIESESES (215 aa). 379-383 is a GTP binding site; sequence RVHSE. Cys384, Cys395, and Cys397 together coordinate Zn(2+). Residues Gln400, 423–425, and Thr445 each bind GTP; that span reads EGR. Asp457 serves as the catalytic Proton acceptor; for GTP cyclohydrolase activity. The active-site Nucleophile; for GTP cyclohydrolase activity is the Arg459. GTP contacts are provided by Thr480 and Lys485.

It in the N-terminal section; belongs to the DHBP synthase family. This sequence in the C-terminal section; belongs to the GTP cyclohydrolase II family. Mg(2+) is required as a cofactor. It depends on Mn(2+) as a cofactor. Requires Zn(2+) as cofactor. In terms of tissue distribution, expressed in leaves, shoots, roots, flowers and siliques.

The protein localises to the plastid. Its subcellular location is the chloroplast. It carries out the reaction D-ribulose 5-phosphate = (2S)-2-hydroxy-3-oxobutyl phosphate + formate + H(+). It catalyses the reaction GTP + 4 H2O = 2,5-diamino-6-hydroxy-4-(5-phosphoribosylamino)-pyrimidine + formate + 2 phosphate + 3 H(+). Its pathway is cofactor biosynthesis; riboflavin biosynthesis; 2-hydroxy-3-oxobutyl phosphate from D-ribulose 5-phosphate: step 1/1. It functions in the pathway cofactor biosynthesis; riboflavin biosynthesis; 5-amino-6-(D-ribitylamino)uracil from GTP: step 1/4. Involved in riboflavin biosynthesis. Catalyzes both the conversion of D-ribulose 5-phosphate to formate and 3,4-dihydroxy-2-butanone 4-phosphate and the conversion of GTP to 2,5-diamino-6-ribosylamino-4(3H)-pyrimidinone 5'-phosphate (DARP), formate and pyrophosphate. RIBA2 and RIBA3 together are not able to complement the loss of function of RIBA1. The chain is Bifunctional riboflavin biosynthesis protein RIBA 1, chloroplastic (RIBA1) from Arabidopsis thaliana (Mouse-ear cress).